Here is a 204-residue protein sequence, read N- to C-terminus: Probable chorismate pyruvate-lyase (204 aa).

Substrate-binding residues include Arg-78, Leu-131, and Glu-190.

Belongs to the UbiC family.

It is found in the cytoplasm. It catalyses the reaction chorismate = 4-hydroxybenzoate + pyruvate. It functions in the pathway cofactor biosynthesis; ubiquinone biosynthesis. Removes the pyruvyl group from chorismate, with concomitant aromatization of the ring, to provide 4-hydroxybenzoate (4HB) for the ubiquinone pathway. The protein is Probable chorismate pyruvate-lyase of Shewanella frigidimarina (strain NCIMB 400).